The sequence spans 65 residues: MLLFTFTFQALVLALIIFSFILVLTLPVIFASPKGWENNKSRIWLACRFWFFLVFLIGILDGIFL.

The next 2 membrane-spanning stretches (helical) occupy residues 11–31 and 44–64; these read LVLALIIFSFILVLTLPVIFA and WLACRFWFFLVFLIGILDGIF.

The protein belongs to the PsbZ family. PSII is composed of 1 copy each of membrane proteins PsbA, PsbB, PsbC, PsbD, PsbE, PsbF, PsbH, PsbI, PsbJ, PsbK, PsbL, PsbM, PsbT, PsbY, PsbZ, Psb30/Ycf12, at least 3 peripheral proteins of the oxygen-evolving complex and a large number of cofactors. It forms dimeric complexes.

It localises to the plastid. It is found in the chloroplast thylakoid membrane. Its function is as follows. May control the interaction of photosystem II (PSII) cores with the light-harvesting antenna, regulates electron flow through the 2 photosystem reaction centers. PSII is a light-driven water plastoquinone oxidoreductase, using light energy to abstract electrons from H(2)O, generating a proton gradient subsequently used for ATP formation. In Euglena gracilis, this protein is Photosystem II reaction center protein Z.